The following is a 258-amino-acid chain: MKNYLLQIEYFGKNYCGWQRQSHSLSVQEELEKALSKIANQNIEVTCAGRTDTGVHATSQIVNFYSNAYRPLSAWQRGVNALLPQDIKILAVQQVNNNFNSRFTAINRTYNYIIYNSATSSPIFAEHCLWENRELDIDKMNQACEYLLGEQDFSSFRSSQCQSNTPFRNIQKAEFIKQGSFIVFEVVGNAFLHHMIRNLVGSLLKVGLGFESPEWIKVVLEAKDRTQAAETAKAHGLYFVGVEYPEFSFKRQIIKLFC.

Residue aspartate 52 is the Nucleophile of the active site. Tyrosine 110 lines the substrate pocket.

This sequence belongs to the tRNA pseudouridine synthase TruA family. Homodimer.

The enzyme catalyses uridine(38/39/40) in tRNA = pseudouridine(38/39/40) in tRNA. Its function is as follows. Formation of pseudouridine at positions 38, 39 and 40 in the anticodon stem and loop of transfer RNAs. The sequence is that of tRNA pseudouridine synthase A from Francisella tularensis subsp. holarctica (strain FTNF002-00 / FTA).